The chain runs to 456 residues: Cysteine--tRNA ligase (456 aa).

C28 contributes to the Zn(2+) binding site. Residues 30 to 40 (ITVYDHCHLGH) carry the 'HIGH' region motif. Positions 209, 234, and 238 each coordinate Zn(2+). Residues 266–270 (KMAKS) carry the 'KMSKS' region motif. K269 lines the ATP pocket.

This sequence belongs to the class-I aminoacyl-tRNA synthetase family. In terms of assembly, monomer. Requires Zn(2+) as cofactor.

The protein localises to the cytoplasm. It catalyses the reaction tRNA(Cys) + L-cysteine + ATP = L-cysteinyl-tRNA(Cys) + AMP + diphosphate. This Legionella pneumophila (strain Corby) protein is Cysteine--tRNA ligase.